We begin with the raw amino-acid sequence, 316 residues long: 4-hydroxy-3-methylbut-2-enyl diphosphate reductase (316 aa).

[4Fe-4S] cluster is bound at residue Cys18. Residues His47 and His80 each coordinate (2E)-4-hydroxy-3-methylbut-2-enyl diphosphate. 2 residues coordinate dimethylallyl diphosphate: His47 and His80. 2 residues coordinate isopentenyl diphosphate: His47 and His80. Cys102 lines the [4Fe-4S] cluster pocket. Position 130 (His130) interacts with (2E)-4-hydroxy-3-methylbut-2-enyl diphosphate. His130 contributes to the dimethylallyl diphosphate binding site. An isopentenyl diphosphate-binding site is contributed by His130. The active-site Proton donor is Glu132. A (2E)-4-hydroxy-3-methylbut-2-enyl diphosphate-binding site is contributed by Thr171. Cys201 contributes to the [4Fe-4S] cluster binding site. Residues Ser229, Ser230, Asn231, and Ser274 each coordinate (2E)-4-hydroxy-3-methylbut-2-enyl diphosphate. Ser229, Ser230, Asn231, and Ser274 together coordinate dimethylallyl diphosphate. Isopentenyl diphosphate contacts are provided by Ser229, Ser230, Asn231, and Ser274.

Belongs to the IspH family. The cofactor is [4Fe-4S] cluster.

The catalysed reaction is isopentenyl diphosphate + 2 oxidized [2Fe-2S]-[ferredoxin] + H2O = (2E)-4-hydroxy-3-methylbut-2-enyl diphosphate + 2 reduced [2Fe-2S]-[ferredoxin] + 2 H(+). It carries out the reaction dimethylallyl diphosphate + 2 oxidized [2Fe-2S]-[ferredoxin] + H2O = (2E)-4-hydroxy-3-methylbut-2-enyl diphosphate + 2 reduced [2Fe-2S]-[ferredoxin] + 2 H(+). It participates in isoprenoid biosynthesis; dimethylallyl diphosphate biosynthesis; dimethylallyl diphosphate from (2E)-4-hydroxy-3-methylbutenyl diphosphate: step 1/1. The protein operates within isoprenoid biosynthesis; isopentenyl diphosphate biosynthesis via DXP pathway; isopentenyl diphosphate from 1-deoxy-D-xylulose 5-phosphate: step 6/6. In terms of biological role, catalyzes the conversion of 1-hydroxy-2-methyl-2-(E)-butenyl 4-diphosphate (HMBPP) into a mixture of isopentenyl diphosphate (IPP) and dimethylallyl diphosphate (DMAPP). Acts in the terminal step of the DOXP/MEP pathway for isoprenoid precursor biosynthesis. The sequence is that of 4-hydroxy-3-methylbut-2-enyl diphosphate reductase from Ruegeria sp. (strain TM1040) (Silicibacter sp.).